Consider the following 647-residue polypeptide: LIM domain kinase 1 (647 aa).

2 LIM zinc-binding domains span residues 25–75 (CASC…CKKD) and 84–137 (CHGC…CGQC). In terms of domain architecture, PDZ spans 165 to 258 (LVSIPASAHG…LLQLTLEHDP (94 aa)). The residue at position 210 (S210) is a Phosphoserine. Phosphothreonine is present on T229. The interval 256 to 319 (HDPHDSLGHG…SPASQRKDLG (64 aa)) is disordered. Positions 266–277 (PVSDPSPLSSPV) are enriched in low complexity. 2 stretches are compositionally biased toward polar residues: residues 278-289 (HTPSGQAASSAR) and 298-313 (SIDTSPGTSSLASPAS). S298, S302, S307, and S310 each carry phosphoserine. Position 323 is a phosphoserine; by MAPKAPK2 (S323). Phosphoserine is present on S337. Residues 339–604 (LIHGEVLGKG…PSFVKLEQWL (266 aa)) enclose the Protein kinase domain. Residues 345-353 (LGKGCFGQA) and K368 contribute to the ATP site. D460 is a catalytic residue. The residue at position 508 (T508) is a Phosphothreonine; by ROCK1.

It belongs to the protein kinase superfamily. TKL Ser/Thr protein kinase family. Self-associates to form homodimers. Interacts with HSP90AA1; this interaction promotes LIMK1 dimerization and subsequent transphosphorylation. Interacts with CDKN1C. Interacts (via LIM domain) with the cytoplasmic domain of NRG1. Interacts with NISCH. Interacts with SSH1. Interacts with RLIM and RNF6. Interacts (via LIM zinc-binding domains) with FAM89B/LRAP25 (via LRR repeat). Forms a tripartite complex with CDC42BPA, CDC42BPB and FAM89B/LRAP25. In terms of processing, autophosphorylated. Phosphorylated on Thr-508 by ROCK1 and PAK1, resulting in activation. Phosphorylated by PAK4 which increases the ability of LIMK1 to phosphorylate cofilin. Phosphorylated at Ser-323 by MAPKAPK2 during activation of VEGFA-induced signaling, which results in activation of LIMK1 and promotion of actin reorganization, cell migration, and tubule formation of endothelial cells. Dephosphorylated and inactivated by SSH1. Phosphorylated by CDC42BP. Ubiquitinated. 'Lys-48'-linked polyubiquitination by RNF6 leads to proteasomal degradation through the 26S proteasome, modulating LIMK1 levels in the growth cone and its effect on axonal outgrowth. Also polyubiquitinated by RLIM. In terms of tissue distribution, highest expression in the nervous system, particularly in the spinal cord and the cranial nerve and dorsal root ganglia.

It is found in the cytoplasm. The protein resides in the nucleus. The protein localises to the cytoskeleton. Its subcellular location is the cell projection. It localises to the lamellipodium. It catalyses the reaction L-seryl-[protein] + ATP = O-phospho-L-seryl-[protein] + ADP + H(+). The enzyme catalyses L-threonyl-[protein] + ATP = O-phospho-L-threonyl-[protein] + ADP + H(+). Functionally, serine/threonine-protein kinase that plays an essential role in the regulation of actin filament dynamics. Acts downstream of several Rho family GTPase signal transduction pathways. Activated by upstream kinases including ROCK1, PAK1 and PAK4, which phosphorylate LIMK1 on a threonine residue located in its activation loop. LIMK1 subsequently phosphorylates and inactivates the actin binding/depolymerizing factors cofilin-1/CFL1, cofilin-2/CFL2 and destrin/DSTN, thereby preventing the cleavage of filamentous actin (F-actin), and stabilizing the actin cytoskeleton. In this way LIMK1 regulates several actin-dependent biological processes including cell motility, cell cycle progression, and differentiation. Phosphorylates TPPP on serine residues, thereby promoting microtubule disassembly. Stimulates axonal outgrowth and may be involved in brain development. This Mus musculus (Mouse) protein is LIM domain kinase 1 (Limk1).